The chain runs to 801 residues: Endonuclease MutS2 (801 aa).

336-343 is a binding site for ATP; the sequence is GPNTGGKT. A disordered region spans residues 696-721; it reads AQQSKAKQKQQKIVKTKTASGSARAT. Over residues 701-710 the composition is skewed to basic residues; the sequence is AKQKQQKIVK. The 76-residue stretch at 726–801 folds into the Smr domain; the sequence is LDLRGVRYEA…GDGATIAELS (76 aa).

Belongs to the DNA mismatch repair MutS family. MutS2 subfamily. As to quaternary structure, homodimer. Binds to stalled ribosomes, contacting rRNA.

Functionally, endonuclease that is involved in the suppression of homologous recombination and thus may have a key role in the control of bacterial genetic diversity. In terms of biological role, acts as a ribosome collision sensor, splitting the ribosome into its 2 subunits. Detects stalled/collided 70S ribosomes which it binds and splits by an ATP-hydrolysis driven conformational change. Acts upstream of the ribosome quality control system (RQC), a ribosome-associated complex that mediates the extraction of incompletely synthesized nascent chains from stalled ribosomes and their subsequent degradation. Probably generates substrates for RQC. The sequence is that of Endonuclease MutS2 from Leuconostoc citreum (strain KM20).